We begin with the raw amino-acid sequence, 377 residues long: tRNA-specific 2-thiouridylase MnmA (377 aa).

ATP is bound by residues 8–15 and M34; that span reads GMSGGVDS. Residues 94–96 are interaction with target base in tRNA; that stretch reads NPD. The Nucleophile role is filled by C99. C99 and C201 are oxidised to a cystine. G123 contacts ATP. Residues 151 to 153 form an interaction with tRNA region; it reads KDQ. Residue C201 is the Cysteine persulfide intermediate of the active site. An interaction with tRNA region spans residues 315–316; the sequence is RY.

The protein belongs to the MnmA/TRMU family.

Its subcellular location is the cytoplasm. The catalysed reaction is S-sulfanyl-L-cysteinyl-[protein] + uridine(34) in tRNA + AH2 + ATP = 2-thiouridine(34) in tRNA + L-cysteinyl-[protein] + A + AMP + diphosphate + H(+). Its function is as follows. Catalyzes the 2-thiolation of uridine at the wobble position (U34) of tRNA, leading to the formation of s(2)U34. The protein is tRNA-specific 2-thiouridylase MnmA of Acinetobacter baumannii (strain ACICU).